We begin with the raw amino-acid sequence, 192 residues long: Imidazoleglycerol-phosphate dehydratase (192 aa).

This sequence belongs to the imidazoleglycerol-phosphate dehydratase family.

It localises to the cytoplasm. The enzyme catalyses D-erythro-1-(imidazol-4-yl)glycerol 3-phosphate = 3-(imidazol-4-yl)-2-oxopropyl phosphate + H2O. The protein operates within amino-acid biosynthesis; L-histidine biosynthesis; L-histidine from 5-phospho-alpha-D-ribose 1-diphosphate: step 6/9. This chain is Imidazoleglycerol-phosphate dehydratase, found in Staphylococcus aureus (strain JH9).